Consider the following 547-residue polypeptide: Cytochrome P450 monooxygenase oblB (547 aa).

The next 2 membrane-spanning stretches (helical) occupy residues 42 to 62 and 242 to 262; these read GAVG…RLFL and FDMF…PWLI. A glycan (N-linked (GlcNAc...) asparagine) is linked at asparagine 277. The chain crosses the membrane as a helical span at residues 345-365; it reads VLIGSGTMTTAGTMGFLCYYI. Position 489 (cysteine 489) interacts with heme.

It belongs to the cytochrome P450 family. Heme serves as cofactor.

It is found in the membrane. The catalysed reaction is ophiobolin F + 4 reduced [NADPH--hemoprotein reductase] + 4 O2 = ophiobolin C + 4 oxidized [NADPH--hemoprotein reductase] + 6 H2O + 4 H(+). It participates in secondary metabolite biosynthesis; terpenoid biosynthesis. Functionally, cytochrome P450 monooxygenase; part of the gene cluster that mediates the biosynthesis of the sesterterpenes ophiobolins, fungal phytotoxins with potential anti-cancer activities. The first step of the pathway is performed by the sesterterpene synthase oblA that possesses both prenyl transferase and terpene cyclase activity, converting isopentenyl diphosphate and dimethylallyl diphosphate into geranylfarnesyl diphosphate (GFPP) and further converting GFPP into ophiobolin F, respectively. Other sesterterpenoids (C(25) terpenoids) are found as minor products of oblA. The cytochrome P450 monooxygenase oblB then catalyzes a four-step oxidative transformation of ophiobolin F to yield ophiobolin C. The function of the cytochrome P450 monooxygenase oblE has still to be determined. The polypeptide is Cytochrome P450 monooxygenase oblB (Emericella variicolor (Aspergillus stellatus)).